The chain runs to 575 residues: MDKYDKIIDLTKRRGFLWNSFEIYGGIAGFFDYGPLGAILKNNVINTWRKHYIVNEGFYEIDSPTVTPYEVLKASGHVENFTDPLVECKSCLESFRADHIIEENVDVDTEGKTLQELQEMIEKNNIKCPKCGGEFKEVSTFNLMFATSIGPGGKRAAFMRPETAQGIFIQFKRISQFFRNKLPFGAVQIGKAYRNEISPRQGVIRLREFTQAEGEFFIDSRKKENFEKFESVKEIVLPLLSGKNQENESLSAEEKIVRMSLSDAVKNGIIAHEAIAYYIAVTKKFLMEIGIDESKLRFRQHLPNEMAHYAADCWDAELYTDRYGWIECVGIADRTNYDLLAHMKNSSEDLSVFVELDEDKEIEVYEIELNYKLVGRTFKGDSKVLEESLKELDDKKMEELVEALETEGKYVLSTCKRDFELLKEYLTAKKVKKTVKGEKIIPHVIEPSYGIDRITYCVMEHAFKEDEDRTVMGFSNAVSPIKVGVFPLVNKEGMPEIAMDLKNKLRENGLIAEYDDSGAIGRRYMRMDEVGTPFCVTIDGETLTDSSVTIRERDSREQFRIPINEVVPYIKDKLN.

The substrate site is built by R96 and E162. ATP is bound by residues 194 to 196 (RNE), 204 to 209 (IRLREF), 327 to 328 (EC), and 450 to 453 (GIDR). 209–213 (FTQAE) provides a ligand contact to substrate. A substrate-binding site is contributed by 446-450 (EPSYG).

The protein belongs to the class-II aminoacyl-tRNA synthetase family.

It is found in the cytoplasm. It carries out the reaction tRNA(Gly) + glycine + ATP = glycyl-tRNA(Gly) + AMP + diphosphate. Catalyzes the attachment of glycine to tRNA(Gly). The sequence is that of Glycine--tRNA ligase from Methanococcus maripaludis (strain C5 / ATCC BAA-1333).